A 301-amino-acid chain; its full sequence is 4-hydroxybenzoate octaprenyltransferase (301 aa).

A run of 8 helical transmembrane segments spans residues 34–54 (IGSL…ADGL), 57–77 (LWTL…GCVI), 108–128 (LWVF…LNWL), 152–172 (LPQV…FAAV), 176–196 (VPLL…AYDT), 221–241 (FDLI…VLVG), 245–265 (DLGV…AYEF), and 279–299 (AFLH…VAVA).

This sequence belongs to the UbiA prenyltransferase family. Mg(2+) is required as a cofactor.

Its subcellular location is the cell inner membrane. The catalysed reaction is all-trans-octaprenyl diphosphate + 4-hydroxybenzoate = 4-hydroxy-3-(all-trans-octaprenyl)benzoate + diphosphate. The protein operates within cofactor biosynthesis; ubiquinone biosynthesis. In terms of biological role, catalyzes the prenylation of para-hydroxybenzoate (PHB) with an all-trans polyprenyl group. Mediates the second step in the final reaction sequence of ubiquinone-8 (UQ-8) biosynthesis, which is the condensation of the polyisoprenoid side chain with PHB, generating the first membrane-bound Q intermediate 3-octaprenyl-4-hydroxybenzoate. The sequence is that of 4-hydroxybenzoate octaprenyltransferase from Xanthomonas euvesicatoria pv. vesicatoria (strain 85-10) (Xanthomonas campestris pv. vesicatoria).